A 92-amino-acid polypeptide reads, in one-letter code: Protein AC152 (92 aa).

Functionally, acts as a transactivator of AC102 and HE65 genes. Therefore, participates in the global recruitment of G-actin to the host nucleus. In Autographa californica nuclear polyhedrosis virus (AcMNPV), this protein is Protein AC152 (AC152).